The chain runs to 388 residues: Succinate--CoA ligase [ADP-forming] subunit beta (388 aa).

The ATP-grasp domain maps to 9–244 (KSLFAEYGLP…PSQDDAREAH (236 aa)). ATP-binding positions include Lys46, 53–55 (GRG), Glu99, Thr102, and Glu107. Residues Asn199 and Asp213 each contribute to the Mg(2+) site. Substrate-binding positions include Asn264 and 321-323 (GIV).

This sequence belongs to the succinate/malate CoA ligase beta subunit family. Heterotetramer of two alpha and two beta subunits. Mg(2+) is required as a cofactor.

It carries out the reaction succinate + ATP + CoA = succinyl-CoA + ADP + phosphate. The catalysed reaction is GTP + succinate + CoA = succinyl-CoA + GDP + phosphate. The protein operates within carbohydrate metabolism; tricarboxylic acid cycle; succinate from succinyl-CoA (ligase route): step 1/1. Functionally, succinyl-CoA synthetase functions in the citric acid cycle (TCA), coupling the hydrolysis of succinyl-CoA to the synthesis of either ATP or GTP and thus represents the only step of substrate-level phosphorylation in the TCA. The beta subunit provides nucleotide specificity of the enzyme and binds the substrate succinate, while the binding sites for coenzyme A and phosphate are found in the alpha subunit. In Shewanella denitrificans (strain OS217 / ATCC BAA-1090 / DSM 15013), this protein is Succinate--CoA ligase [ADP-forming] subunit beta.